A 150-amino-acid polypeptide reads, in one-letter code: Large ribosomal subunit protein bL9 (150 aa).

Belongs to the bacterial ribosomal protein bL9 family.

Functionally, binds to the 23S rRNA. The sequence is that of Large ribosomal subunit protein bL9 from Neisseria gonorrhoeae (strain ATCC 700825 / FA 1090).